Reading from the N-terminus, the 495-residue chain is Protein adenylyltransferase Fic (495 aa).

Positions Met-1–Pro-23 are disordered. Residues Leu-36–Ser-58 traverse the membrane as a helical segment. 2 TPR repeats span residues Ala-121–His-154 and Pro-155–Asn-189. An Inhibitory (S/T)XXXE(G/N) motif motif is present at residues Ser-246–Gly-251. Residues Glu-250 and Val-331–His-334 contribute to the ATP site. Residues Ile-300 to Asp-435 form the Fido domain. His-378 is an active-site residue. Residues Asp-382 to Arg-389, Tyr-414 to Tyr-415, and Asn-422 contribute to the ATP site.

This sequence belongs to the fic family. In terms of assembly, homodimer.

The protein localises to the membrane. It catalyses the reaction L-tyrosyl-[protein] + ATP = O-(5'-adenylyl)-L-tyrosyl-[protein] + diphosphate. The enzyme catalyses L-threonyl-[protein] + ATP = 3-O-(5'-adenylyl)-L-threonyl-[protein] + diphosphate. The catalysed reaction is 3-O-(5'-adenylyl)-L-threonyl-[protein] + H2O = L-threonyl-[protein] + AMP + H(+). With respect to regulation, the side chain of Glu-250 determines which of the two opposing activities (AMPylase or de-AMPylase) will take place. In response to endoplasmic reticulum stress, mediates de-AMPylase activity. Adenylyltransferase activity is inhibited by the inhibitory helix present at the N-terminus: Glu-250 binds ATP and competes with ATP-binding at Arg-389, thereby preventing adenylyltransferase activity. In unstressed cells, disengagement of Glu-250 promotes adenylyltransferase activity. Activation dissociates ATP-binding from Glu-250, allowing ordered binding of the entire ATP moiety with the alpha-phosphate in an orientation that is productive for accepting an incoming target hydroxyl side chain. In terms of biological role, protein that can both mediate the addition of adenosine 5'-monophosphate (AMP) to specific residues of target proteins (AMPylation), and the removal of the same modification from target proteins (de-AMPylation), depending on the context. The side chain of Glu-250 determines which of the two opposing activities (AMPylase or de-AMPylase) will take place. Acts as a key regulator of the unfolded protein response (UPR) by mediating AMPylation or de-AMPylation of Hsc70-3/BiP. In unstressed cells, acts as an adenylyltransferase by mediating AMPylation of Hsc70-3/BiP at 'Thr-518', thereby inactivating it. In response to endoplasmic reticulum stress, acts as a phosphodiesterase by mediating removal of ATP (de-AMPylation) from Hsc70-3/BiP at 'Thr-518', leading to restore HSPA5/BiP activity. The chain is Protein adenylyltransferase Fic from Drosophila erecta (Fruit fly).